Consider the following 376-residue polypeptide: 26S proteasome non-ATPase regulatory subunit 13 (376 aa).

The PCI domain occupies 171–338 (SYYKDALRFL…KRVHMTWVQP (168 aa)). Residue Lys298 is modified to N6-acetyllysine.

Belongs to the proteasome subunit S11 family. Component of the 19S proteasome regulatory particle complex. The 26S proteasome consists of a 20S core particle (CP) and two 19S regulatory subunits (RP). The regulatory particle is made of a lid composed of 9 subunits including PSMD13, a base containing 6 ATPases and few additional components.

Functionally, component of the 26S proteasome, a multiprotein complex involved in the ATP-dependent degradation of ubiquitinated proteins. This complex plays a key role in the maintenance of protein homeostasis by removing misfolded or damaged proteins, which could impair cellular functions, and by removing proteins whose functions are no longer required. Therefore, the proteasome participates in numerous cellular processes, including cell cycle progression, apoptosis, or DNA damage repair. The chain is 26S proteasome non-ATPase regulatory subunit 13 from Rattus norvegicus (Rat).